The primary structure comprises 477 residues: Tripartite motif-containing protein 72 (477 aa).

The Zn(2+) site is built by Cys-14, Cys-17, Cys-29, His-31, Cys-34, Cys-37, Cys-53, Cys-56, Cys-86, His-89, Cys-97, Asp-100, Cys-105, Cys-108, His-114, and His-117. The RING-type zinc-finger motif lies at 14–57; it reads CPLCLQLFDAPVTAECGHSFCRACLGRVAGEPAADGTVLCPCCQ. The B box-type zinc-finger motif lies at 81-122; that stretch reads VPQGHCEEHLDPLSIYCEQDRALVCGVCASLGSHRGHRLLPA. Residues 135-232 are a coiled coil; sequence QQKLQLQEAC…EKVLEEVADK (98 aa). Cys-144 is subject to S-nitrosocysteine. Ser-255 is subject to Phosphoserine. Residues 271-475 enclose the B30.2/SPRY domain; it reads DFKFQVWRKM…PLLLVGPEGA (205 aa).

The protein belongs to the TRIM/RBCC family. As to quaternary structure, homodimer. Homooligomer; disulfide-linked. Oligomerizes on the phospholipid membrane. Interacts with DYSF and CAV3. Disulfide bond formation at Cys-242 occurs in case of membrane damage that cause the entry of the oxidized milieu of the extracellular space, resulting in homooligomerization. In terms of processing, S-nitrosylation at Cys-144 stabilizes TRIM72 and protects against oxidation-induced protein degradation and cell death.

Its subcellular location is the cell membrane. It is found in the sarcolemma. It localises to the cytoplasmic vesicle membrane. It catalyses the reaction S-ubiquitinyl-[E2 ubiquitin-conjugating enzyme]-L-cysteine + [acceptor protein]-L-lysine = [E2 ubiquitin-conjugating enzyme]-L-cysteine + N(6)-ubiquitinyl-[acceptor protein]-L-lysine.. It functions in the pathway protein modification; protein ubiquitination. With respect to regulation, specifically binds phosphatidylserine. The binding to phospholipids enhances ubiquitination activity. Muscle-specific E3 ubiquitin-protein ligase that plays a central role in cell membrane repair by nucleating the assembly of the repair machinery at injury sites. Its ubiquitination activity is mediated by E2 ubiquitin-conjugating enzymes UBE2D1, UBE2D2 and UBE2D3. Acts as a sensor of oxidation: upon membrane damage, entry of extracellular oxidative environment results in disulfide bond formation and homooligomerization at the injury site. This oligomerization acts as a nucleation site for recruitment of TRIM72-containing vesicles to the injury site, leading to membrane patch formation. Probably acts upstream of the Ca(2+)-dependent membrane resealing process. Required for transport of DYSF to sites of cell injury during repair patch formation. Regulates membrane budding and exocytosis. May be involved in the regulation of the mobility of KCNB1-containing endocytic vesicles. This is Tripartite motif-containing protein 72 from Homo sapiens (Human).